Reading from the N-terminus, the 127-residue chain is Putative pre-16S rRNA nuclease (127 aa).

Belongs to the YqgF nuclease family.

Its subcellular location is the cytoplasm. Functionally, could be a nuclease involved in processing of the 5'-end of pre-16S rRNA. This Campylobacter jejuni subsp. jejuni serotype O:6 (strain 81116 / NCTC 11828) protein is Putative pre-16S rRNA nuclease.